Consider the following 135-residue polypeptide: Interleukin-4 (135 aa).

The signal sequence occupies residues M1 to G24. Disulfide bonds link C27–C135, C48–C85, and C70–C105. The N-linked (GlcNAc...) asparagine glycan is linked to N62.

Belongs to the IL-4/IL-13 family.

The protein resides in the secreted. Functionally, participates in at least several B-cell activation processes as well as of other cell types. It is a costimulator of DNA-synthesis. It induces the expression of class II MHC molecules on resting B-cells. It enhances both secretion and cell surface expression of IgE and IgG1. It also regulates the expression of the low affinity Fc receptor for IgE (CD23) on both lymphocytes and monocytes. Positively regulates IL31RA expression in macrophages. Stimulates autophagy in dendritic cells by interfering with mTORC1 signaling and through the induction of RUFY4. The polypeptide is Interleukin-4 (IL4) (Boselaphus tragocamelus (Nilgai)).